We begin with the raw amino-acid sequence, 416 residues long: Gamma-glutamyl phosphate reductase (416 aa).

Belongs to the gamma-glutamyl phosphate reductase family.

It is found in the cytoplasm. The catalysed reaction is L-glutamate 5-semialdehyde + phosphate + NADP(+) = L-glutamyl 5-phosphate + NADPH + H(+). It functions in the pathway amino-acid biosynthesis; L-proline biosynthesis; L-glutamate 5-semialdehyde from L-glutamate: step 2/2. Catalyzes the NADPH-dependent reduction of L-glutamate 5-phosphate into L-glutamate 5-semialdehyde and phosphate. The product spontaneously undergoes cyclization to form 1-pyrroline-5-carboxylate. The protein is Gamma-glutamyl phosphate reductase of Salmonella heidelberg (strain SL476).